Reading from the N-terminus, the 166-residue chain is Lipoprotein signal peptidase (166 aa).

3 helical membrane passes run leucine 12–valine 32, methionine 66–tryptophan 86, and alanine 101–isoleucine 121. Catalysis depends on residues aspartate 122 and aspartate 140. Residues serine 132 to leucine 152 traverse the membrane as a helical segment.

It belongs to the peptidase A8 family.

Its subcellular location is the cell inner membrane. It carries out the reaction Release of signal peptides from bacterial membrane prolipoproteins. Hydrolyzes -Xaa-Yaa-Zaa-|-(S,diacylglyceryl)Cys-, in which Xaa is hydrophobic (preferably Leu), and Yaa (Ala or Ser) and Zaa (Gly or Ala) have small, neutral side chains.. It functions in the pathway protein modification; lipoprotein biosynthesis (signal peptide cleavage). This protein specifically catalyzes the removal of signal peptides from prolipoproteins. In Sinorhizobium fredii (strain NBRC 101917 / NGR234), this protein is Lipoprotein signal peptidase.